We begin with the raw amino-acid sequence, 863 residues long: MRVMGIRMNYQHLWKWGIMLLGILMTCSVAEDLWVTVYYGVPVWKEATTTLFCASDAKSYEPEAHNIWATHACVPTDPNPREIEMENVTENFNMWKNNMVEQMHEDIISLWDQNLKPCVKLTPLCVTLNCTNAGGNKTTNGNNTTNQEEQMMEKGEMKNCSFNITTVISDKKKQVHALFYRLDVVPIDDDNSANTSNTNYTNYRLINCNTSAITQACPKVTFEPIPIHYCAPAGFAILKCKDKKFNGTGPCKKVSTVQCTHGIRPVVSTQLLLNGSLAEEEIIIRSENLTNNVKTIIVHLNESVEINCTRPDNKITRQSTPIGLGQALYTTRIKGDIRQAYCNISAAAWNKTLQQVAKKLGDLLNQTTIIFKPPAGGDPEITTHSFNCGGEFFYCNTSRLFNSTWNSSTWNNDTLNSEGTIKLPCRIKQIINMWQGVGKAMYAPPIEGLIKCTSNITGLLLTRDGGVNNSTNETFRPGGGDMKDNWRNELYKYKVVRIEPLGIAPTRAKRRVVEREKRAIGLGAVFLGFLGAAGSTMGAVSVALTGQARQLLSGIVQQQNNLLRAIEAQQHMLQLTVWGIKQLQARVLAVESYLKDQQLLGIWGCSGKHICTTTVPWNSSWSNKSLEEIWNNMTWIEWEREIDNYTGVIYSLIENSQIQQEKNEQDLLQLDKWASLWNWFSITKWLWYIKIFIMIVGGLIGLRIVFTVLSLVNRVRQGYSPLSFQTLLPAPRGPDRPEGIEEEGGEQGRDRSIRLVNGFSALFWDDLRNLCLFSYHRLRDLILIATRIVELLGRRGWEAIKYLWSLLQYWTQELKNSFISLLNATAIAVAEGTDRIIELIRRAFRAVLHIPRRVRQGLERALL.

The N-terminal stretch at 1-31 (MRVMGIRMNYQHLWKWGIMLLGILMTCSVAE) is a signal peptide. Over 32–691 (DLWVTVYYGV…ITKWLWYIKI (660 aa)) the chain is Extracellular. A disulfide bridge links Cys53 with Cys73. Asn87, Asn129, Asn136, Asn142, Asn143, Asn159, Asn163, Asn194, Asn199, Asn209, Asn246, Asn274, Asn288, Asn301, and Asn307 each carry an N-linked (GlcNAc...) asparagine; by host glycan. 5 disulfide bridges follow: Cys118-Cys217, Cys125-Cys208, Cys130-Cys160, Cys230-Cys259, and Cys240-Cys251. The interval 130–159 (CTNAGGNKTTNGNNTTNQEEQMMEKGEMKN) is V1. The tract at residues 160–208 (CSFNITTVISDKKKQVHALFYRLDVVPIDDDNSANTSNTNYTNYRLINC) is V2. Residues 308–341 (CTRPDNKITRQSTPIGLGQALYTTRIKGDIRQAY) are V3. A disulfide bridge connects residues Cys308 and Cys342. Asn343, Asn350, and Asn365 each carry an N-linked (GlcNAc...) asparagine; by host glycan. Residues 374–384 (PAGGDPEITTH) form a CD4-binding loop region. 2 disulfides stabilise this stretch: Cys388/Cys452 and Cys395/Cys425. Positions 395 to 425 (CNTSRLFNSTWNSSTWNNDTLNSEGTIKLPC) are V4. N-linked (GlcNAc...) asparagine; by host glycans are attached at residues Asn396, Asn402, Asn406, Asn412, Asn455, Asn468, Asn469, and Asn472. V5 stretches follow at residues 467–478 (VNNSTNETFRPG) and 470–478 (STNETFRPG). The fusion peptide stretch occupies residues 519-539 (AIGLGAVFLGFLGAAGSTMGA). The tract at residues 581-599 (KQLQARVLAVESYLKDQQL) is immunosuppression. The cysteines at positions 605 and 611 are disulfide-linked. Asn618, Asn623, Asn632, and Asn644 each carry an N-linked (GlcNAc...) asparagine; by host glycan. Positions 640–674 (REIDNYTGVIYSLIENSQIQQEKNEQDLLQLDKWA) form a coiled coil. The segment at 669–690 (QLDKWASLWNWFSITKWLWYIK) is MPER; binding to GalCer. Residues 692 to 712 (FIMIVGGLIGLRIVFTVLSLV) form a helical membrane-spanning segment. Topologically, residues 713–863 (NRVRQGYSPL…VRQGLERALL (151 aa)) are cytoplasmic. Residues 719–722 (YSPL) carry the YXXL motif; contains endocytosis signal motif. The tract at residues 729–748 (PAPRGPDRPEGIEEEGGEQG) is disordered. Cys771 is lipidated: S-palmitoyl cysteine; by host. The Di-leucine internalization motif signature appears at 862–863 (LL).

This sequence belongs to the HIV-1 env protein family. The mature envelope protein (Env) consists of a homotrimer of non-covalently associated gp120-gp41 heterodimers. The resulting complex protrudes from the virus surface as a spike. There seems to be as few as 10 spikes on the average virion. Interacts with host CD4, CCR5 and CXCR4. Gp120 also interacts with the C-type lectins CD209/DC-SIGN and CLEC4M/DC-SIGNR (collectively referred to as DC-SIGN(R)). Gp120 and gp41 interact with GalCer. Gp120 interacts with host ITGA4/ITGB7 complex; on CD4+ T-cells, this interaction results in rapid activation of integrin ITGAL/LFA-1, which facilitates efficient cell-to-cell spreading of HIV-1. Gp120 interacts with cell-associated heparan sulfate; this interaction increases virus infectivity on permissive cells and may be involved in infection of CD4- cells. As to quaternary structure, the mature envelope protein (Env) consists of a homotrimer of non-covalently associated gp120-gp41 heterodimers. The resulting complex protrudes from the virus surface as a spike. There seems to be as few as 10 spikes on the average virion. Post-translationally, highly glycosylated by host. The high number of glycan on the protein is reffered to as 'glycan shield' because it contributes to hide protein sequence from adaptive immune system. In terms of processing, palmitoylation of the transmembrane protein and of Env polyprotein (prior to its proteolytic cleavage) is essential for their association with host cell membrane lipid rafts. Palmitoylation is therefore required for envelope trafficking to classical lipid rafts, but not for viral replication. Specific enzymatic cleavages in vivo yield mature proteins. Envelope glycoproteins are synthesized as an inactive precursor that is heavily N-glycosylated and processed likely by host cell furin in the Golgi to yield the mature SU and TM proteins. The cleavage site between SU and TM requires the minimal sequence [KR]-X-[KR]-R. About 2 of the 9 disulfide bonds of gp41 are reduced by P4HB/PDI, following binding to CD4 receptor.

The protein localises to the virion membrane. It is found in the host cell membrane. The protein resides in the host endosome membrane. In terms of biological role, oligomerizes in the host endoplasmic reticulum into predominantly trimers. In a second time, gp160 transits in the host Golgi, where glycosylation is completed. The precursor is then proteolytically cleaved in the trans-Golgi and thereby activated by cellular furin or furin-like proteases to produce gp120 and gp41. Functionally, attaches the virus to the host lymphoid cell by binding to the primary receptor CD4. This interaction induces a structural rearrangement creating a high affinity binding site for a chemokine coreceptor like CXCR4 and/or CCR5. Acts as a ligand for CD209/DC-SIGN and CLEC4M/DC-SIGNR, which are respectively found on dendritic cells (DCs), and on endothelial cells of liver sinusoids and lymph node sinuses. These interactions allow capture of viral particles at mucosal surfaces by these cells and subsequent transmission to permissive cells. HIV subverts the migration properties of dendritic cells to gain access to CD4+ T-cells in lymph nodes. Virus transmission to permissive T-cells occurs either in trans (without DCs infection, through viral capture and transmission), or in cis (following DCs productive infection, through the usual CD4-gp120 interaction), thereby inducing a robust infection. In trans infection, bound virions remain infectious over days and it is proposed that they are not degraded, but protected in non-lysosomal acidic organelles within the DCs close to the cell membrane thus contributing to the viral infectious potential during DCs' migration from the periphery to the lymphoid tissues. On arrival at lymphoid tissues, intact virions recycle back to DCs' cell surface allowing virus transmission to CD4+ T-cells. Acts as a class I viral fusion protein. Under the current model, the protein has at least 3 conformational states: pre-fusion native state, pre-hairpin intermediate state, and post-fusion hairpin state. During fusion of viral and target intracellular membranes, the coiled coil regions (heptad repeats) assume a trimer-of-hairpins structure, positioning the fusion peptide in close proximity to the C-terminal region of the ectodomain. The formation of this structure appears to drive apposition and subsequent fusion of viral and target cell membranes. Complete fusion occurs in host cell endosomes and is dynamin-dependent, however some lipid transfer might occur at the plasma membrane. The virus undergoes clathrin-dependent internalization long before endosomal fusion, thus minimizing the surface exposure of conserved viral epitopes during fusion and reducing the efficacy of inhibitors targeting these epitopes. Membranes fusion leads to delivery of the nucleocapsid into the cytoplasm. The chain is Envelope glycoprotein gp160 from Human immunodeficiency virus type 1 group M subtype D (isolate Z84) (HIV-1).